Consider the following 331-residue polypeptide: 6-phosphogluconolactonase (331 aa).

Lysine 287 carries the N6-acetyllysine modification.

This sequence belongs to the cycloisomerase 2 family.

It carries out the reaction 6-phospho-D-glucono-1,5-lactone + H2O = 6-phospho-D-gluconate + H(+). It functions in the pathway carbohydrate degradation; pentose phosphate pathway; D-ribulose 5-phosphate from D-glucose 6-phosphate (oxidative stage): step 2/3. Catalyzes the hydrolysis of 6-phosphogluconolactone to 6-phosphogluconate. The polypeptide is 6-phosphogluconolactonase (Escherichia coli O6:K15:H31 (strain 536 / UPEC)).